A 346-amino-acid chain; its full sequence is Holliday junction branch migration complex subunit RuvB (346 aa).

Positions 1-183 (MTEQRIIASS…FGIVQRLEFY (183 aa)) are large ATPase domain (RuvB-L). ATP contacts are provided by residues Ile22, Arg23, Gly64, Lys67, Thr68, Thr69, 130-132 (EDF), Arg173, Tyr183, and Arg220. Thr68 provides a ligand contact to Mg(2+). The interval 184 to 254 (SPQELTRIVI…VAQAAMQMLK (71 aa)) is small ATPAse domain (RuvB-S). Residues 257–346 (PEGFDELDRR…PGIGEPGDLF (90 aa)) are head domain (RuvB-H). DNA-binding residues include Arg293, Arg312, and Arg317.

The protein belongs to the RuvB family. In terms of assembly, homohexamer. Forms an RuvA(8)-RuvB(12)-Holliday junction (HJ) complex. HJ DNA is sandwiched between 2 RuvA tetramers; dsDNA enters through RuvA and exits via RuvB. An RuvB hexamer assembles on each DNA strand where it exits the tetramer. Each RuvB hexamer is contacted by two RuvA subunits (via domain III) on 2 adjacent RuvB subunits; this complex drives branch migration. In the full resolvosome a probable DNA-RuvA(4)-RuvB(12)-RuvC(2) complex forms which resolves the HJ.

The protein resides in the cytoplasm. It catalyses the reaction ATP + H2O = ADP + phosphate + H(+). In terms of biological role, the RuvA-RuvB-RuvC complex processes Holliday junction (HJ) DNA during genetic recombination and DNA repair, while the RuvA-RuvB complex plays an important role in the rescue of blocked DNA replication forks via replication fork reversal (RFR). RuvA specifically binds to HJ cruciform DNA, conferring on it an open structure. The RuvB hexamer acts as an ATP-dependent pump, pulling dsDNA into and through the RuvAB complex. RuvB forms 2 homohexamers on either side of HJ DNA bound by 1 or 2 RuvA tetramers; 4 subunits per hexamer contact DNA at a time. Coordinated motions by a converter formed by DNA-disengaged RuvB subunits stimulates ATP hydrolysis and nucleotide exchange. Immobilization of the converter enables RuvB to convert the ATP-contained energy into a lever motion, pulling 2 nucleotides of DNA out of the RuvA tetramer per ATP hydrolyzed, thus driving DNA branch migration. The RuvB motors rotate together with the DNA substrate, which together with the progressing nucleotide cycle form the mechanistic basis for DNA recombination by continuous HJ branch migration. Branch migration allows RuvC to scan DNA until it finds its consensus sequence, where it cleaves and resolves cruciform DNA. This Xanthomonas axonopodis pv. citri (strain 306) protein is Holliday junction branch migration complex subunit RuvB.